The following is a 133-amino-acid chain: Small ribosomal subunit protein bS6 (133 aa).

It belongs to the bacterial ribosomal protein bS6 family.

Functionally, binds together with bS18 to 16S ribosomal RNA. The polypeptide is Small ribosomal subunit protein bS6 (Borrelia turicatae (strain 91E135)).